A 159-amino-acid chain; its full sequence is Cyclic pyranopterin monophosphate synthase (159 aa).

Residues 75 to 77 (LCH) and 113 to 114 (ME) each bind substrate. The active site involves D128.

It belongs to the MoaC family. In terms of assembly, homohexamer; trimer of dimers.

It carries out the reaction (8S)-3',8-cyclo-7,8-dihydroguanosine 5'-triphosphate = cyclic pyranopterin phosphate + diphosphate. The protein operates within cofactor biosynthesis; molybdopterin biosynthesis. In terms of biological role, catalyzes the conversion of (8S)-3',8-cyclo-7,8-dihydroguanosine 5'-triphosphate to cyclic pyranopterin monophosphate (cPMP). The polypeptide is Cyclic pyranopterin monophosphate synthase (Cupriavidus metallidurans (strain ATCC 43123 / DSM 2839 / NBRC 102507 / CH34) (Ralstonia metallidurans)).